The chain runs to 518 residues: Bifunctional methyltransferase (518 aa).

The segment at 1–300 (MQYSIKQILN…SHNRVIEISP (300 aa)) is hemK. Positions 1–302 (MQYSIKQILN…NRVIEISPIN (302 aa)) are RF MTase. S-adenosyl-L-methionine contacts are provided by residues 140 to 144 (GTGSG), Asp-163, Trp-192, Asn-207, Glu-347, Glu-372, Asn-399, and Asp-421. 207 to 210 (NPPY) is a binding site for substrate. The segment at 301–518 (INLNRSYARR…MILQHALTGH (218 aa)) is tRNA (guanine-N(7)-)-methyltransferase. Residues 305-518 (RSYARRIGKS…MILQHALTGH (214 aa)) form a tRNA MTase region. Asp-421 is an active-site residue. 2 residues coordinate substrate: Lys-425 and Asp-457.

In the C-terminal section; belongs to the class I-like SAM-binding methyltransferase superfamily. TrmB family. This sequence in the N-terminal section; belongs to the protein N5-glutamine methyltransferase family. PrmC subfamily.

It carries out the reaction L-glutaminyl-[peptide chain release factor] + S-adenosyl-L-methionine = N(5)-methyl-L-glutaminyl-[peptide chain release factor] + S-adenosyl-L-homocysteine + H(+). It catalyses the reaction guanosine(46) in tRNA + S-adenosyl-L-methionine = N(7)-methylguanosine(46) in tRNA + S-adenosyl-L-homocysteine. In terms of biological role, methylates the class 1 translation termination release factors RF1/PrfA and RF2/PrfB on the glutamine residue of the universally conserved GGQ motif. Catalyzes the formation of N(7)-methylguanine at position 46 (m7G46) in tRNA. In Rickettsia typhi (strain ATCC VR-144 / Wilmington), this protein is Bifunctional methyltransferase (prmC/trmB).